The sequence spans 219 residues: Lipid transferase CIDEA (219 aa).

The CIDE-N domain maps to 33–110 (PARPFRVSNH…ILEKGQKWMP (78 aa)). The segment at 163-180 (CTGLKGLLRSLLRFLSYS) is amphipathic helix.

The protein belongs to the CIDE family. In terms of assembly, homodimer. Interacts with CIDEC. Directly interacts with CEBPB. Interacts with isoform CLSTN3beta of CLSTN3; inhibiting the lipid transferase activity of CIDEA. In terms of tissue distribution, expressed in omental and subcutaneous adipose tissue (at protein level).

The protein localises to the lipid droplet. It is found in the nucleus. It catalyses the reaction a triacyl-sn-glycerol(in) = a triacyl-sn-glycerol(out). Functionally, lipid transferase that promotes unilocular lipid droplet formation by mediating lipid droplet fusion. Lipid droplet fusion promotes their enlargement, restricting lipolysis and favoring lipid storage. Localizes on the lipid droplet surface, at focal contact sites between lipid droplets, and mediates atypical lipid droplet fusion by promoting directional net neutral lipid transfer from the smaller to larger lipid droplets. The transfer direction may be driven by the internal pressure difference between the contacting lipid droplet pair and occurs at a lower rate than that promoted by CIDEC. May also act as a CEBPB coactivator in epithelial cells to control the expression of a subset of CEBPB downstream target genes, including ID2, IGF1, PRLR, SOCS1, SOCS3, XDH, but not casein. By interacting with CEBPB, strengthens the association of CEBPB with the XDH promoter, increases histone acetylation and dissociates HDAC1 from the promoter. When overexpressed, induces apoptosis; the physiological significance of its role in apoptosis is unclear. In Homo sapiens (Human), this protein is Lipid transferase CIDEA.